A 682-amino-acid polypeptide reads, in one-letter code: Activating transcription factor 7-interacting protein 2 (682 aa).

A disordered region spans residues 120–148; the sequence is SRTTESPSRVFTEEAKDSLNTSENDSEHQ. A compositionally biased stretch (polar residues) spans 137 to 148; it reads SLNTSENDSEHQ. Positions 328-378 form a coiled coil; sequence EIYSINYELFDKKLKELNQRIGKTECRNKHEGIADKLLAKIAKLQRRIKTV. At S416 the chain carries Phosphoserine. Polar residues-rich tracts occupy residues 418-451 and 462-490; these read IEKSSVNYEPSNPSEKGSKKINLSSDQNKSVSES and ESPNLTTPITSNPTDTRKITSGNSSNSPN. 2 disordered regions span residues 418 to 491 and 513 to 538; these read IEKS…SPNA and NCNTESPVSPLESHSKAASNSKETTP. S488 and S521 each carry phosphoserine. Residues 528–538 show a composition bias toward polar residues; it reads KAASNSKETTP. Positions 575 to 680 constitute a Fibronectin type-III domain; sequence PPQKPELKVK…IKSIPGFSEN (106 aa).

It belongs to the MCAF family. In terms of assembly, interacts with MBD1, SETDB1 and SP1. Probably forms a complex with SETDB1 and MBD1.

The protein localises to the nucleus. Functionally, recruiter that couples transcriptional factors to general transcription apparatus and thereby modulates transcription regulation and chromatin formation. Can both act as an activator or a repressor depending on the context. Mediates MBD1-dependent transcriptional repression, probably by recruiting complexes containing SETDB1. The complex formed with MBD1 and SETDB1 represses transcription and probably couples DNA methylation and histone H3 'Lys-9' trimethylation (H3K9me3) activity. The polypeptide is Activating transcription factor 7-interacting protein 2 (ATF7IP2) (Homo sapiens (Human)).